Reading from the N-terminus, the 487-residue chain is Serine/threonine-protein kinase 4 (487 aa).

An N-acetylmethionine modification is found at methionine 1. At threonine 3 the chain carries Phosphothreonine. The 252-residue stretch at 30 to 281 (FDVLEKLGEG…ATQLLQHPFV (252 aa)) folds into the Protein kinase domain. ATP contacts are provided by residues 36-44 (LGEGSYGSV) and lysine 59. Aspartate 149 (proton acceptor) is an active-site residue. The residue at position 183 (threonine 183) is a Phosphothreonine; by autocatalysis. Phosphoserine is present on serine 265. Positions 290-310 (LRDLINEAMDVKLKRQESQQR) form a coiled coil. Positions 303–312 (KRQESQQREV) are enriched in basic and acidic residues. A disordered region spans residues 303–332 (KRQESQQREVDQDDEENSEEDEMDSGTMVR). Residues 313-326 (DQDDEENSEEDEMD) are compositionally biased toward acidic residues. Serine 320 is subject to Phosphoserine. Threonine 340 and threonine 367 each carry phosphothreonine. The residue at position 387 (threonine 387) is a Phosphothreonine; by PKB/AKT1. Serine 410 and serine 414 each carry phosphoserine. Tyrosine 433 is modified (phosphotyrosine). An SARAH domain is found at 433-480 (YEFLKSWTVEDLQKRLLALDPMMEQEIEEIRQKYQSKRQPILDAIEAK).

The protein belongs to the protein kinase superfamily. STE Ser/Thr protein kinase family. STE20 subfamily. In terms of assembly, homodimer; mediated via the coiled-coil region. Interacts with NORE1, which inhibits autoactivation. Interacts with and stabilizes SAV1. Interacts with RASSF1. Interacts with FOXO3. Interacts with RASSF2 (via SARAH domain). Interacts with AR, PKB/AKT1, TNNI3 and SIRT1. Interacts with DLG5 (via PDZ domain 3). Interacts with MARK3 and SCRIB in the presence of DLG5. Mg(2+) is required as a cofactor. In terms of processing, autophosphorylated on serine and threonine residues. Phosphorylation at Thr-387 by PKB/AKT1, leads to inhibition of its: kinase activity, nuclear translocation and autophosphorylation at Thr-183. It also diminishes its cleavage by caspases and its ability to phosphorylate FOXO3. Proteolytically cleaved by caspase-3 during apoptosis at Asp-326 and Asp-349 resulting in a 37 kDa or a 39 kDa subunit respectively. The 39 kDa subunit is further cleaved into the 37 kDa form. Proteolytic cleavage results in kinase activation and nuclear translocation of the truncated form (MST1/N). It is less likely that cleavage at Asp-349 is a prerequisite for activation as this site is not conserved in the murine ortholog.

Its subcellular location is the cytoplasm. The protein localises to the nucleus. It catalyses the reaction L-seryl-[protein] + ATP = O-phospho-L-seryl-[protein] + ADP + H(+). The enzyme catalyses L-threonyl-[protein] + ATP = O-phospho-L-threonyl-[protein] + ADP + H(+). Inhibited by the C-terminal non-catalytic region. Activated by caspase-cleavage. Full activation also requires homodimerization and autophosphorylation of Thr-183. Activated by RASSF1 which acts by preventing its dephosphorylation. Its function is as follows. Stress-activated, pro-apoptotic kinase which, following caspase-cleavage, enters the nucleus and induces chromatin condensation followed by internucleosomal DNA fragmentation. Key component of the Hippo signaling pathway which plays a pivotal role in organ size control and tumor suppression by restricting proliferation and promoting apoptosis. The core of this pathway is composed of a kinase cascade wherein STK3/MST2 and STK4/MST1, in complex with its regulatory protein SAV1, phosphorylates and activates LATS1/2 in complex with its regulatory protein MOB1, which in turn phosphorylates and inactivates YAP1 oncoprotein and WWTR1/TAZ. Phosphorylation of YAP1 by LATS2 inhibits its translocation into the nucleus to regulate cellular genes important for cell proliferation, cell death, and cell migration. STK3/MST2 and STK4/MST1 are required to repress proliferation of mature hepatocytes, to prevent activation of facultative adult liver stem cells (oval cells), and to inhibit tumor formation. Phosphorylates 'Ser-14' of histone H2B (H2BS14ph) during apoptosis. Phosphorylates FOXO3 upon oxidative stress, which results in its nuclear translocation and cell death initiation. Phosphorylates MOBKL1A, MOBKL1B and RASSF2. Phosphorylates TNNI3 (cardiac Tn-I) and alters its binding affinity to TNNC1 (cardiac Tn-C) and TNNT2 (cardiac Tn-T). Phosphorylates FOXO1 on 'Ser-212' and regulates its activation and stimulates transcription of PMAIP1 in a FOXO1-dependent manner. Phosphorylates SIRT1 and inhibits SIRT1-mediated p53/TP53 deacetylation, thereby promoting p53/TP53 dependent transcription and apoptosis upon DNA damage. Acts as an inhibitor of PKB/AKT1. Phosphorylates AR on 'Ser-650' and suppresses its activity by intersecting with PKB/AKT1 signaling and antagonizing formation of AR-chromatin complexes. The sequence is that of Serine/threonine-protein kinase 4 (STK4) from Papio anubis (Olive baboon).